We begin with the raw amino-acid sequence, 232 residues long: Syntaxin-51 (232 aa).

The Cytoplasmic portion of the chain corresponds to 1-208; the sequence is MASSSDSWMR…NKNMRSGCSC (208 aa). The t-SNARE coiled-coil homology domain occupies 136 to 198; it reads RQVMREQDEG…RRVQKSLAVM (63 aa). Residues 209–229 form a helical; Anchor for type IV membrane protein membrane-spanning segment; it reads MSMLLSVLGIVGLAVVIWMLV. At 230–232 the chain is on the vesicular side; the sequence is KYM.

The protein belongs to the syntaxin family. In terms of assembly, interacts with VTI11 and either SYP21, or SYP22, or SYP61 in the prevacuolar compartment, or with VTI12 and SYP61 in the trans-Golgi network to form t-SNARE complexes. Expressed in root, leaf, stem, flower and silique.

The protein resides in the golgi apparatus. It localises to the trans-Golgi network membrane. The protein localises to the prevacuolar compartment membrane. Vesicle trafficking protein that functions in the secretory pathway. This chain is Syntaxin-51 (SYP51), found in Arabidopsis thaliana (Mouse-ear cress).